Reading from the N-terminus, the 239-residue chain is Splicing factor U2AF 35 kDa subunit (239 aa).

N-acetylalanine is present on Ala2. The C3H1-type 1 zinc-finger motif lies at 12 to 40 (EKDKVNCSFYFKIGACRHGDRCSRLHNKP). Position 39 is an N6-methyllysine (Lys39). A phosphoserine mark is found at Ser61 and Ser145. One can recognise an RRM domain in the interval 65 to 147 (LRCAVSDVEM…QPIHAELSPV (83 aa)). The C3H1-type 2 zinc-finger motif lies at 149–176 (DFREACCRQYEMGECTRGGFCNFMHLKP). Omega-N-methylarginine is present on Arg165. The disordered stretch occupies residues 183-239 (RELYGRRRKKHRSRSRSRERRSRSRDRGRGGGGGGGGGGGRERDRRRSRDRERSGRF). Residues 188-208 (RRRKKHRSRSRSRERRSRSRD) are compositionally biased toward basic residues. A compositionally biased stretch (gly residues) spans 212-221 (GGGGGGGGGG). The span at 222–239 (GRERDRRRSRDRERSGRF) shows a compositional bias: basic and acidic residues.

It belongs to the splicing factor SR family. Identified in the spliceosome C complex. Heterodimer with U2AF2. Interacts (via RS domain) with PHF5A (via N-terminus). Interacts with ZRANB2. Interacts with SDE2. Interacts with SF3B1. As to expression, expressed in primary spermatocytes and elongating spermatids (at protein level).

Its subcellular location is the nucleus. The protein localises to the nucleus speckle. In terms of biological role, plays a critical role in both constitutive and enhancer-dependent splicing by mediating protein-protein interactions and protein-RNA interactions required for accurate 3'-splice site selection. Recruits U2 snRNP to the branch point. Directly mediates interactions between U2AF2 and proteins bound to the enhancers and thus may function as a bridge between U2AF2 and the enhancer complex to recruit it to the adjacent intron. The protein is Splicing factor U2AF 35 kDa subunit (U2af1) of Mus musculus (Mouse).